The chain runs to 199 residues: Recombination protein RecR (199 aa).

Residues Cys-58–Cys-73 form a C4-type zinc finger. The Toprim domain occupies Leu-81–Pro-176.

This sequence belongs to the RecR family.

May play a role in DNA repair. It seems to be involved in an RecBC-independent recombinational process of DNA repair. It may act with RecF and RecO. The sequence is that of Recombination protein RecR from Alkaliphilus oremlandii (strain OhILAs) (Clostridium oremlandii (strain OhILAs)).